The following is a 400-amino-acid chain: Elongation factor Tu (400 aa).

The 200-residue stretch at 10–209 (KPHVNIGTIG…AVDKYIPTPQ (200 aa)) folds into the tr-type G domain. The segment at 19 to 26 (GHVDHGKT) is G1. 19–26 (GHVDHGKT) is a binding site for GTP. Position 26 (Thr-26) interacts with Mg(2+). The segment at 60–64 (GITIN) is G2. Positions 81-84 (DCPG) are G3. GTP-binding positions include 81-85 (DCPGH) and 136-139 (NKVD). The G4 stretch occupies residues 136 to 139 (NKVD). Residues 174 to 176 (SAL) form a G5 region.

It belongs to the TRAFAC class translation factor GTPase superfamily. Classic translation factor GTPase family. EF-Tu/EF-1A subfamily. As to quaternary structure, monomer.

Its subcellular location is the cytoplasm. The enzyme catalyses GTP + H2O = GDP + phosphate + H(+). Functionally, GTP hydrolase that promotes the GTP-dependent binding of aminoacyl-tRNA to the A-site of ribosomes during protein biosynthesis. This is Elongation factor Tu from Caldicellulosiruptor bescii (strain ATCC BAA-1888 / DSM 6725 / KCTC 15123 / Z-1320) (Anaerocellum thermophilum).